Here is a 32-residue protein sequence, read N- to C-terminus: Unknown protein from spot 206 of 2D-PAGE of etiolated coleoptile (32 aa).

This Zea mays (Maize) protein is Unknown protein from spot 206 of 2D-PAGE of etiolated coleoptile.